Here is a 392-residue protein sequence, read N- to C-terminus: Probable protein phosphatase 2C 29 (392 aa).

A PPM-type phosphatase domain is found at 44–353 (DYSVAVAQAN…DDITVVVLFL (310 aa)). Mn(2+) contacts are provided by D75, G76, D285, and D344. A disordered region spans residues 360–392 (AGRGDEIDGTDGPVDVFSLSPDDREDPTRPVLR).

It belongs to the PP2C family. It depends on Mg(2+) as a cofactor. The cofactor is Mn(2+).

The enzyme catalyses O-phospho-L-seryl-[protein] + H2O = L-seryl-[protein] + phosphate. The catalysed reaction is O-phospho-L-threonyl-[protein] + H2O = L-threonyl-[protein] + phosphate. This chain is Probable protein phosphatase 2C 29, found in Oryza sativa subsp. japonica (Rice).